The primary structure comprises 309 residues: tRNA dimethylallyltransferase 1 (309 aa).

An ATP-binding site is contributed by 14 to 21 (GPTASGKS). 16–21 (TASGKS) serves as a coordination point for substrate. Residues 39 to 42 (DSMQ) are interaction with substrate tRNA.

It belongs to the IPP transferase family. As to quaternary structure, monomer. Mg(2+) is required as a cofactor.

The enzyme catalyses adenosine(37) in tRNA + dimethylallyl diphosphate = N(6)-dimethylallyladenosine(37) in tRNA + diphosphate. Catalyzes the transfer of a dimethylallyl group onto the adenine at position 37 in tRNAs that read codons beginning with uridine, leading to the formation of N6-(dimethylallyl)adenosine (i(6)A). In Pelobacter propionicus (strain DSM 2379 / NBRC 103807 / OttBd1), this protein is tRNA dimethylallyltransferase 1.